Here is a 589-residue protein sequence, read N- to C-terminus: O-fucosyltransferase 11 (589 aa).

Residues 1–37 (MKSKIHHQPNGSNNGVVSSNDNGCRSESPSPPLSPNR) are disordered. Low complexity predominate over residues 10–23 (NGSNNGVVSSNDNG). Residues 68 to 88 (MIYASGLLMCVGPFSGLVGWV) traverse the membrane as a helical; Signal-anchor for type II membrane protein segment. Residues N112, N136, and N239 are each glycosylated (N-linked (GlcNAc...) asparagine). 332–334 (HLR) contributes to the substrate binding site. 3 N-linked (GlcNAc...) asparagine glycosylation sites follow: N405, N406, and N564.

The protein belongs to the glycosyltransferase GT106 family.

It is found in the membrane. Its pathway is glycan metabolism. The polypeptide is O-fucosyltransferase 11 (Arabidopsis thaliana (Mouse-ear cress)).